The chain runs to 182 residues: dTTP/UTP pyrophosphatase (182 aa).

Aspartate 64 serves as the catalytic Proton acceptor.

This sequence belongs to the Maf family. YhdE subfamily. A divalent metal cation serves as cofactor.

The protein resides in the cytoplasm. The catalysed reaction is dTTP + H2O = dTMP + diphosphate + H(+). It catalyses the reaction UTP + H2O = UMP + diphosphate + H(+). Nucleoside triphosphate pyrophosphatase that hydrolyzes dTTP and UTP. May have a dual role in cell division arrest and in preventing the incorporation of modified nucleotides into cellular nucleic acids. The polypeptide is dTTP/UTP pyrophosphatase (Thermosipho melanesiensis (strain DSM 12029 / CIP 104789 / BI429)).